We begin with the raw amino-acid sequence, 481 residues long: Guanine nucleotide exchange factor C9orf72 homolog (481 aa).

The 172-residue stretch at 23 to 194 (SPLLAATFAY…ELLASMKSHS (172 aa)) folds into the uDENN C9ORF72-type domain. The cDENN C9ORF72-type domain maps to 200–343 (DIADTVLNDD…SELTAFWRAT (144 aa)). Residues 370 to 464 (VLHRDTLVKA…IKPGLHSFIF (95 aa)) form the dDENN C9ORF72-type domain. The tract at residues 461 to 481 (SFIFGRPFYTSVQERDVLMTF) is required for the homodimerization of the C9orf72-SMCR8 complex.

In terms of assembly, component of the C9orf72-SMCR8 complex, at least composed of C9orf72, SMCR8 and WDR41. The complex is formed of two protomers, each individually consisting of one molecule each of C9orf72, SMCR8 and WDR41. The protomers homodimerize via an interaction between C9orf72 (via C-terminus) and SMCR8 (via N-terminus). Within each protomer SMCR8 (via DENN domain) acts as a bridging protein between WDR41 (via C-terminus and N-terminus) and C9orf72 (via C-terminus). The C9orf72-SMCR8 complex associates with the ULK1/ATG1 kinase complex. Interacts with ULK1/ATG1 kinase complex members ULK1, ATG13 and RB1CC1. Interacts with SMCR8; the interaction is direct. Interacts with HNRNPA1, HNRNPA2B1 and UBQLN2. Interacts with small Rab GTPase RAB1A; the interaction mediates recruitment of RAB1A to the ULK1/ATG1 kinase complex. Also interacts with small Rab GTPase RAB7A. Interacts with cofilin. Interacts with GTP-binding proteins ARF1 and ARF6. Interacts with the DLG4/PSD-95. Interacts with CARM1 (via PH domain-like fold). Interacts with RAB39A and RAB39B (in GDP-bound forms); functions as GEF for RAB39A and RAB39B. In terms of tissue distribution, expressed in postnatal cerebellum and cortex (at protein level). Neuronal expression is detected in several regions of the adult brain and spinal cord. Prominent expression also observed in embryonic and early postnatal neurons including retinal ganglion cells, sensory neurons in the olfactory epithelium and in dorsal root ganglia, and spinal motor neurons. Expressed in the developing cerebral cortex, cerebellum, olfactory bulb, hippocampus and spinal cord in the embryo and in P0 cortical neurons and astrocytes. Also expressed in non-neuronal tissues such as kidney and tooth. In the spleen, highly expressed in myeloid cells compared to B cell and T cell populations where expression is much lower. In the brain, highly expressed in microglia. Expressed in the forebrain, including in the glomerular layer of the olfactory bulb (at protein level).

Its subcellular location is the nucleus. It is found in the cytoplasm. It localises to the P-body. The protein resides in the stress granule. The protein localises to the endosome. Its subcellular location is the lysosome. It is found in the cytoplasmic vesicle. It localises to the autophagosome. The protein resides in the autolysosome. The protein localises to the secreted. Its subcellular location is the cell projection. It is found in the axon. It localises to the growth cone. The protein resides in the perikaryon. The protein localises to the dendrite. Its subcellular location is the presynapse. It is found in the postsynapse. Its function is as follows. Acts as a guanine-nucleotide releasing factor (GEF) for Rab GTPases by promoting the conversion of inactive RAB-GDP to the active form RAB-GTP. Acts as a GEF for RAB39A which enables HOPS-mediated autophagosome-lysosome membrane tethering and fusion in mammalian autophagy. Component of the C9orf72-SMCR8 complex where both subunits display GEF activity and that regulates autophagy. As part of the C9orf72-SMCR8-WDR41 (CSW) complex, functions as GEF for RAB8A, and RAB39B, thereby promoting autophagosome maturation. As part of the C9orf72-SMCR8 complex, also functions as GTPase activating protein (GAP) for RAB8A and RAB11A in vitro. The C9orf72-SMCR8 complex also acts as a regulator of autophagy initiation by interacting with the ULK1/ATG1 kinase complex and modulating its protein kinase activity. Promotes initiation of autophagy by regulating the RAB1A-dependent trafficking of the ULK1/ATG1 kinase complex to the phagophore which leads to autophagosome formation. Acts as a regulator of mTORC1 signaling by promoting phosphorylation of mTORC1 substrates. Plays a role in endosomal trafficking. May be involved in regulating the maturation of phagosomes to lysosomes. Promotes the lysosomal localization and lysosome-mediated degradation of CARM1 which leads to inhibition of starvation-induced lipid metabolism. Regulates actin dynamics in motor neurons by inhibiting the GTP-binding activity of ARF6, leading to ARF6 inactivation. This reduces the activity of the LIMK1 and LIMK2 kinases which are responsible for phosphorylation and inactivation of CFL1/cofilin, leading to cofilin activation. Positively regulates axon extension and axon growth cone size in spinal motor neurons. Required for SMCR8 protein expression and localization at pre- and post-synaptic compartments in the forebrain, also regulates protein abundance of RAB3A and GRIA1/GLUR1 in post-synaptic compartments in the forebrain and hippocampus. Plays a role within the hematopoietic system in restricting inflammation and the development of autoimmunity. This Mus musculus (Mouse) protein is Guanine nucleotide exchange factor C9orf72 homolog.